The primary structure comprises 101 residues: Citrate lyase acyl carrier protein (101 aa).

The residue at position 14 (Ser-14) is an O-(phosphoribosyl dephospho-coenzyme A)serine.

Belongs to the CitD family. As to quaternary structure, oligomer with a subunit composition of (alpha,beta,gamma)6.

It is found in the cytoplasm. Functionally, covalent carrier of the coenzyme of citrate lyase. The polypeptide is Citrate lyase acyl carrier protein (Streptococcus uberis (strain ATCC BAA-854 / 0140J)).